A 321-amino-acid polypeptide reads, in one-letter code: MSKPIQMERGVKYRDADKMALIPVKNVVTERQELLRKPEWLKIKLPTDSSRIQGIKAAMRKNGLHSVCEEASCPNLSECFNHGTATFMILGAICTRRCPFCDVAHGRPVTPDANEPEKLAQTIQDMGLRYVVITSVDRDDLRDGGAQHFADCISAIRAKNPTIKIETLVPDFRGRMDRALDILTATPPDVFNHNLENVPRVYRQVRPGANYDWSLKLLERFKEAHPDIPTKSGLMVGLGETNAEIVEVMHDLRRHGVTMLTLGQYLQPSRHHLPVQRYVSPAEFDEMKAEAMAMGFTHAACGPFVRSSYHADLQAKGMEVK.

Cysteine 68, cysteine 73, cysteine 79, cysteine 94, cysteine 98, cysteine 101, and serine 308 together coordinate [4Fe-4S] cluster. The region spanning 80–297 (FNHGTATFMI…KAEAMAMGFT (218 aa)) is the Radical SAM core domain.

The protein belongs to the radical SAM superfamily. Lipoyl synthase family. It depends on [4Fe-4S] cluster as a cofactor.

It is found in the cytoplasm. It catalyses the reaction [[Fe-S] cluster scaffold protein carrying a second [4Fe-4S](2+) cluster] + N(6)-octanoyl-L-lysyl-[protein] + 2 oxidized [2Fe-2S]-[ferredoxin] + 2 S-adenosyl-L-methionine + 4 H(+) = [[Fe-S] cluster scaffold protein] + N(6)-[(R)-dihydrolipoyl]-L-lysyl-[protein] + 4 Fe(3+) + 2 hydrogen sulfide + 2 5'-deoxyadenosine + 2 L-methionine + 2 reduced [2Fe-2S]-[ferredoxin]. Its pathway is protein modification; protein lipoylation via endogenous pathway; protein N(6)-(lipoyl)lysine from octanoyl-[acyl-carrier-protein]: step 2/2. In terms of biological role, catalyzes the radical-mediated insertion of two sulfur atoms into the C-6 and C-8 positions of the octanoyl moiety bound to the lipoyl domains of lipoate-dependent enzymes, thereby converting the octanoylated domains into lipoylated derivatives. The sequence is that of Lipoyl synthase from Yersinia pseudotuberculosis serotype O:1b (strain IP 31758).